The sequence spans 440 residues: GTPase Der (440 aa).

EngA-type G domains lie at 3 to 167 and 176 to 351; these read PIIA…PYDR and TRIA…EQYC. GTP is bound by residues 9–16, 56–60, 119–122, 182–189, 229–233, and 294–297; these read GRPNVGKS, DTGGF, NKVD, DTAGI, and NKWD. Residues 352 to 436 form the KH-like domain; the sequence is KRVTTGELNR…PLKLIFRGRD (85 aa).

It belongs to the TRAFAC class TrmE-Era-EngA-EngB-Septin-like GTPase superfamily. EngA (Der) GTPase family. Associates with the 50S ribosomal subunit.

Its function is as follows. GTPase that plays an essential role in the late steps of ribosome biogenesis. This chain is GTPase Der, found in Geobacter sp. (strain M21).